A 140-amino-acid polypeptide reads, in one-letter code: Nucleoside diphosphate kinase (140 aa).

Residues Lys-11, Phe-59, Arg-87, Thr-93, Arg-104, and Asn-114 each coordinate ATP. His-117 functions as the Pros-phosphohistidine intermediate in the catalytic mechanism.

The protein belongs to the NDK family. The cofactor is Mg(2+).

It is found in the cytoplasm. It catalyses the reaction a 2'-deoxyribonucleoside 5'-diphosphate + ATP = a 2'-deoxyribonucleoside 5'-triphosphate + ADP. The catalysed reaction is a ribonucleoside 5'-diphosphate + ATP = a ribonucleoside 5'-triphosphate + ADP. Major role in the synthesis of nucleoside triphosphates other than ATP. The ATP gamma phosphate is transferred to the NDP beta phosphate via a ping-pong mechanism, using a phosphorylated active-site intermediate. This Metallosphaera sedula (strain ATCC 51363 / DSM 5348 / JCM 9185 / NBRC 15509 / TH2) protein is Nucleoside diphosphate kinase.